Reading from the N-terminus, the 137-residue chain is BolA-like protein 1 (137 aa).

S81 carries the phosphoserine modification. The disordered stretch occupies residues 115–137 (RENPQLDISPPCLGGSKKTRGTS).

Belongs to the BolA/IbaG family. As to quaternary structure, interacts with GLRX5.

It localises to the mitochondrion. Its function is as follows. Acts as a mitochondrial iron-sulfur (Fe-S) cluster assembly factor that facilitates (Fe-S) cluster insertion into a subset of mitochondrial proteins. Probably acts together with the monothiol glutaredoxin GLRX5. May protect cells against oxidative stress. In Mus musculus (Mouse), this protein is BolA-like protein 1 (Bola1).